Here is a 282-residue protein sequence, read N- to C-terminus: Cytochrome c1 (282 aa).

The N-terminal stretch at 1–24 (MTIKLRFVASLALVFGLAAASVPA) is a signal peptide. The heme c site is built by cysteine 62, cysteine 65, histidine 66, and methionine 207. A helical membrane pass occupies residues 253-273 (WWVLGFLVIFTGLLVATKIVV).

The main subunits of complex b-c1 are: cytochrome b, cytochrome c1 and the Rieske protein. Post-translationally, binds 1 heme c group covalently per subunit.

The protein localises to the cell membrane. Its function is as follows. Component of the ubiquinol-cytochrome c reductase complex (complex III or cytochrome b-c1 complex), which is a respiratory chain that generates an electrochemical potential coupled to ATP synthesis. c1 functions as an electron donor to cytochrome c. In Blastochloris viridis (Rhodopseudomonas viridis), this protein is Cytochrome c1 (petC).